The primary structure comprises 66 residues: UPF0337 protein M6_Spy1542 (66 aa).

A compositionally biased stretch (basic and acidic residues) spans 1–10 (MSEEKLKAKV). The segment at 1 to 22 (MSEEKLKAKVEQASGSLKEGAG) is disordered.

It belongs to the UPF0337 (CsbD) family.

This chain is UPF0337 protein M6_Spy1542, found in Streptococcus pyogenes serotype M6 (strain ATCC BAA-946 / MGAS10394).